The primary structure comprises 186 residues: DNA-directed RNA polymerase 22 kDa subunit (186 aa).

The protein belongs to the poxviridae DNA-directed RNA polymerase 22 kDa subunit family. The DNA-dependent RNA polymerase used for intermediate and late genes expression consists of eight subunits Rpo30/OPG66, Rpo7/OPG90, Rpo22/OPG103, Rpo147/OPG105, Rpo18/OPG119, Rpo19/OPG131, Rpo132/OPG151 and Rpo35/OPG156. The same holoenzyme, with the addition of the transcription-specificity factor OPG109, is used for early gene expression.

The protein resides in the virion. The enzyme catalyses RNA(n) + a ribonucleoside 5'-triphosphate = RNA(n+1) + diphosphate. Its function is as follows. Part of the DNA-dependent RNA polymerase which catalyzes the transcription of viral DNA into RNA using the four ribonucleoside triphosphates as substrates. Responsible for the transcription of early, intermediate and late genes. DNA-dependent RNA polymerase associates with the early transcription factor (ETF), itself composed of OPG118 and OPG133, thereby allowing the early genes transcription. Late transcription, and probably also intermediate transcription, require newly synthesized RNA polymerase. The sequence is that of DNA-directed RNA polymerase 22 kDa subunit (OPG103) from Vertebrata (FPV).